The primary structure comprises 375 residues: DNA replication and repair protein RecF (375 aa).

Residue 30 to 37 (GNNAQGKS) coordinates ATP.

Belongs to the RecF family.

It is found in the cytoplasm. In terms of biological role, the RecF protein is involved in DNA metabolism; it is required for DNA replication and normal SOS inducibility. RecF binds preferentially to single-stranded, linear DNA. It also seems to bind ATP. This Microcystis aeruginosa (strain NIES-843 / IAM M-2473) protein is DNA replication and repair protein RecF.